Reading from the N-terminus, the 166-residue chain is MNIRQQLTQLLTLGYVFASAFMLWKTLSVVANLHSPIVVVLSGSMEPAFQRGDILFLWNRDEKQKVGDIVVYEIEGKTIPIVHRVLREHHNLEKQLLLTKGDNNAVDDLSLYAKKQSYLNRKNDLVGTVKGYLPFIGYVTILISENQYFKFGLLGLLGLSSLFSNE.

Over 1–9 (MNIRQQLTQ) the chain is Cytoplasmic. The helical; Signal-anchor for type II membrane protein transmembrane segment at 10 to 30 (LLTLGYVFASAFMLWKTLSVV) threads the bilayer. The Lumenal segment spans residues 31–166 (ANLHSPIVVV…LGLSSLFSNE (136 aa)). Catalysis depends on charge relay system residues serine 44, histidine 83, and aspartate 108. Residues 152–163 (GLLGLLGLSSLF) form a C-terminal short (CTS) helix region.

This sequence belongs to the peptidase S26B family. Component of the signal peptidase complex (SPC) composed of a catalytic subunit SEC11 and three accessory subunits SPC1, SPC2 and SPC3. The complex induces a local thinning of the ER membrane which is used to measure the length of the signal peptide (SP) h-region of protein substrates. This ensures the selectivity of the complex towards h-regions shorter than 18-20 amino acids. SPC associates with the translocon complex.

The protein localises to the endoplasmic reticulum membrane. The enzyme catalyses Cleavage of hydrophobic, N-terminal signal or leader sequences from secreted and periplasmic proteins.. In terms of biological role, catalytic component of the signal peptidase complex (SPC) which catalyzes the cleavage of N-terminal signal sequences from nascent proteins as they are translocated into the lumen of the endoplasmic reticulum. Specifically cleaves N-terminal signal peptides that contain a hydrophobic alpha-helix (h-region) shorter than 18-20 amino acids. The polypeptide is Signal peptidase complex catalytic subunit SEC11 (SEC11) (Lodderomyces elongisporus (strain ATCC 11503 / CBS 2605 / JCM 1781 / NBRC 1676 / NRRL YB-4239) (Yeast)).